We begin with the raw amino-acid sequence, 206 residues long: LexA repressor (206 aa).

Residues 28 to 48 (RAEIATRLGFKSANAAEEHLK) constitute a DNA-binding region (H-T-H motif). Catalysis depends on for autocatalytic cleavage activity residues S123 and K160.

Belongs to the peptidase S24 family. Homodimer.

It carries out the reaction Hydrolysis of Ala-|-Gly bond in repressor LexA.. Represses a number of genes involved in the response to DNA damage (SOS response), including recA and lexA. In the presence of single-stranded DNA, RecA interacts with LexA causing an autocatalytic cleavage which disrupts the DNA-binding part of LexA, leading to derepression of the SOS regulon and eventually DNA repair. The chain is LexA repressor from Shewanella sp. (strain MR-4).